A 228-amino-acid polypeptide reads, in one-letter code: Methylthioribulose-1-phosphate dehydratase (228 aa).

Residue Cys-92 participates in substrate binding. Zn(2+) contacts are provided by His-110 and His-112. The active-site Proton donor/acceptor is the Glu-135. His-192 serves as a coordination point for Zn(2+).

Belongs to the aldolase class II family. MtnB subfamily. Requires Zn(2+) as cofactor.

Its subcellular location is the cytoplasm. It localises to the nucleus. The catalysed reaction is 5-(methylsulfanyl)-D-ribulose 1-phosphate = 5-methylsulfanyl-2,3-dioxopentyl phosphate + H2O. The protein operates within amino-acid biosynthesis; L-methionine biosynthesis via salvage pathway; L-methionine from S-methyl-5-thio-alpha-D-ribose 1-phosphate: step 2/6. Functionally, catalyzes the dehydration of methylthioribulose-1-phosphate (MTRu-1-P) into 2,3-diketo-5-methylthiopentyl-1-phosphate (DK-MTP-1-P). The chain is Methylthioribulose-1-phosphate dehydratase from Schizosaccharomyces pombe (strain 972 / ATCC 24843) (Fission yeast).